The primary structure comprises 639 residues: Eukaryotic translation initiation factor 2-alpha kinase 2 (639 aa).

One can recognise a Protein kinase domain in the interval 171–588; sequence FEEYSLLGRG…LEVLNCGLLL (418 aa). ATP contacts are provided by residues 177 to 185 and lysine 200; that span reads LGRGGFGSV. Positions 298 to 320 are enriched in low complexity; the sequence is ISTSRKSSYSSTTESSNFENLES. The segment at 298–322 is disordered; it reads ISTSRKSSYSSTTESSNFENLESPR. The active-site Proton acceptor is aspartate 417.

This sequence belongs to the protein kinase superfamily. Ser/Thr protein kinase family. GCN2 subfamily. Post-translationally, autophosphorylated.

It catalyses the reaction L-seryl-[protein] + ATP = O-phospho-L-seryl-[protein] + ADP + H(+). The catalysed reaction is L-threonyl-[protein] + ATP = O-phospho-L-threonyl-[protein] + ADP + H(+). Mediates down-regulation of protein synthesis in response to stress conditions by the phosphorylation of the alpha subunit of eIF-2 (tif211) on 'Ser-52'. Protein synthesis is inhibited at the level of initiation. Activity is inhibited in the presence of heme. The sequence is that of Eukaryotic translation initiation factor 2-alpha kinase 2 (hri2) from Schizosaccharomyces pombe (strain 972 / ATCC 24843) (Fission yeast).